Consider the following 504-residue polypeptide: Maturase K (504 aa).

It belongs to the intron maturase 2 family. MatK subfamily.

It localises to the plastid. It is found in the chloroplast. In terms of biological role, usually encoded in the trnK tRNA gene intron. Probably assists in splicing its own and other chloroplast group II introns. The chain is Maturase K from Pseudoturritis turrita (Tower rock-cress).